Here is a 305-residue protein sequence, read N- to C-terminus: Cytochrome c biogenesis protein CcsA (305 aa).

The next 8 helical transmembrane spans lie at 11-31 (ANAS…KAIF), 36-56 (ILQL…ALLL), 75-95 (LMFL…YIQI), 97-117 (FIGF…TFFL), 142-162 (IMMA…AFLF), 212-232 (TIGI…VWAN), 239-259 (WSWD…AIYL), and 273-293 (AIVA…VNLL).

It belongs to the CcmF/CycK/Ccl1/NrfE/CcsA family. In terms of assembly, may interact with Ccs1.

The protein resides in the plastid. Its subcellular location is the chloroplast thylakoid membrane. Its function is as follows. Required during biogenesis of c-type cytochromes (cytochrome c6 and cytochrome f) at the step of heme attachment. The chain is Cytochrome c biogenesis protein CcsA from Mesostigma viride (Green alga).